The following is a 390-amino-acid chain: Cell division protein FtsZ (390 aa).

Residues 20–24 (GGGNN), 106–108 (GTG), Glu137, Arg141, and Asp184 each bind GTP.

This sequence belongs to the FtsZ family. Homodimer. Polymerizes to form a dynamic ring structure in a strictly GTP-dependent manner. Interacts directly with several other division proteins.

It localises to the cytoplasm. Functionally, essential cell division protein that forms a contractile ring structure (Z ring) at the future cell division site. The regulation of the ring assembly controls the timing and the location of cell division. One of the functions of the FtsZ ring is to recruit other cell division proteins to the septum to produce a new cell wall between the dividing cells. Binds GTP and shows GTPase activity. This chain is Cell division protein FtsZ, found in Mycoplasmopsis pulmonis (strain UAB CTIP) (Mycoplasma pulmonis).